Consider the following 120-residue polypeptide: NAD(P)H-quinone oxidoreductase subunit 3, chloroplastic (120 aa).

Transmembrane regions (helical) follow at residues 9–29 (IFWA…LISG), 64–84 (MFAL…PWAM), and 88–108 (VLGV…ILGL).

The protein belongs to the complex I subunit 3 family. As to quaternary structure, NDH is composed of at least 16 different subunits, 5 of which are encoded in the nucleus.

It localises to the plastid. It is found in the chloroplast thylakoid membrane. The catalysed reaction is a plastoquinone + NADH + (n+1) H(+)(in) = a plastoquinol + NAD(+) + n H(+)(out). The enzyme catalyses a plastoquinone + NADPH + (n+1) H(+)(in) = a plastoquinol + NADP(+) + n H(+)(out). In terms of biological role, NDH shuttles electrons from NAD(P)H:plastoquinone, via FMN and iron-sulfur (Fe-S) centers, to quinones in the photosynthetic chain and possibly in a chloroplast respiratory chain. The immediate electron acceptor for the enzyme in this species is believed to be plastoquinone. Couples the redox reaction to proton translocation, and thus conserves the redox energy in a proton gradient. In Lobularia maritima (Sweet alyssum), this protein is NAD(P)H-quinone oxidoreductase subunit 3, chloroplastic.